We begin with the raw amino-acid sequence, 503 residues long: Phenylalanine--tRNA ligase alpha subunit (503 aa).

S2 carries the N-acetylserine modification. Positions 2-173 are contains the major tRNA-Phe binding sites; the sequence is SDFQLEILKK…KRKLIAQGKI (172 aa). L-phenylalanine is bound by residues T333, 374 to 376, and Y414; that span reads QVE. E416 contacts Mg(2+). F440 contributes to the L-phenylalanine binding site.

Belongs to the class-II aminoacyl-tRNA synthetase family. Phe-tRNA synthetase alpha subunit type 2 subfamily. Tetramer of two alpha and two beta subunits. Mg(2+) is required as a cofactor.

It is found in the cytoplasm. It carries out the reaction tRNA(Phe) + L-phenylalanine + ATP = L-phenylalanyl-tRNA(Phe) + AMP + diphosphate + H(+). This is Phenylalanine--tRNA ligase alpha subunit (FRS2) from Saccharomyces cerevisiae (strain ATCC 204508 / S288c) (Baker's yeast).